A 442-amino-acid polypeptide reads, in one-letter code: Proline--tRNA ligase (442 aa).

Belongs to the class-II aminoacyl-tRNA synthetase family. ProS type 2 subfamily. As to quaternary structure, homodimer.

Its subcellular location is the cytoplasm. The enzyme catalyses tRNA(Pro) + L-proline + ATP = L-prolyl-tRNA(Pro) + AMP + diphosphate. Its function is as follows. Catalyzes the attachment of proline to tRNA(Pro) in a two-step reaction: proline is first activated by ATP to form Pro-AMP and then transferred to the acceptor end of tRNA(Pro). The polypeptide is Proline--tRNA ligase (Brucella anthropi (strain ATCC 49188 / DSM 6882 / CCUG 24695 / JCM 21032 / LMG 3331 / NBRC 15819 / NCTC 12168 / Alc 37) (Ochrobactrum anthropi)).